Reading from the N-terminus, the 60-residue chain is Small, acid-soluble spore protein 1 (60 aa).

Belongs to the alpha/beta-type SASP family. Post-translationally, SASP are degraded in the first minutes of spore germination and provide amino acids for both new protein synthesis and metabolism.

Its function is as follows. SASP are bound to spore DNA. They are double-stranded DNA-binding proteins that cause DNA to change to an a-like conformation. They protect the DNA backbone from chemical and enzymatic cleavage and are thus involved in dormant spore's high resistance to UV light. In Clostridium perfringens (strain 13 / Type A), this protein is Small, acid-soluble spore protein 1 (ssp1).